The sequence spans 299 residues: Cuticle collagen 34 (299 aa).

Residues 105 to 282 (PGPAGTPGKP…GSPGERGICP (178 aa)) form a disordered region. Over residues 129-162 (PGRPPQQPCEPITPPPCKPCPQGPPGPPGPPGPP) the composition is skewed to pro residues. Low complexity predominate over residues 164–181 (DSGEPGSPGLPGQDAAPG). Composition is skewed to pro residues over residues 182 to 195 (EPGP…PGAP) and 215 to 233 (PGEP…PGSP). The interval 216 to 278 (GEPGPPGEAG…AGPPGSPGER (63 aa)) is triple-helical region. Residues 251–263 (NGPDGQPGADGNP) show a composition bias toward low complexity. Residues 265-274 (APGPAGPPGS) show a composition bias toward pro residues.

Belongs to the cuticular collagen family. As to quaternary structure, collagen polypeptide chains are complexed within the cuticle by disulfide bonds and other types of covalent cross-links.

In terms of biological role, nematode cuticles are composed largely of collagen-like proteins. The cuticle functions both as an exoskeleton and as a barrier to protect the worm from its environment. The protein is Cuticle collagen 34 (col-34) of Caenorhabditis elegans.